A 200-amino-acid chain; its full sequence is Recombination protein RecR (200 aa).

A C4-type zinc finger spans residues 57–72 (CDSCQNFSDTEICQIC). The region spanning 80 to 175 (GTLCVVESPS…LITRLAHGIP (96 aa)) is the Toprim domain.

The protein belongs to the RecR family.

In terms of biological role, may play a role in DNA repair. It seems to be involved in an RecBC-independent recombinational process of DNA repair. It may act with RecF and RecO. In Marinobacter nauticus (strain ATCC 700491 / DSM 11845 / VT8) (Marinobacter aquaeolei), this protein is Recombination protein RecR.